Here is a 514-residue protein sequence, read N- to C-terminus: 1-pyrroline-5-carboxylate dehydrogenase (514 aa).

Residues E286 and C320 contribute to the active site.

This sequence belongs to the aldehyde dehydrogenase family. RocA subfamily.

The enzyme catalyses L-glutamate 5-semialdehyde + NAD(+) + H2O = L-glutamate + NADH + 2 H(+). The protein operates within amino-acid degradation; L-proline degradation into L-glutamate; L-glutamate from L-proline: step 2/2. The protein is 1-pyrroline-5-carboxylate dehydrogenase of Staphylococcus haemolyticus (strain JCSC1435).